The primary structure comprises 129 residues: uncharacterized protein (129 aa).

An Isoglutamyl lysine isopeptide (Lys-Gln) (interchain with Q-Cter in protein Pup) cross-link involves residue Lys121.

This is an uncharacterized protein from Mycolicibacterium smegmatis (strain ATCC 700084 / mc(2)155) (Mycobacterium smegmatis).